The sequence spans 233 residues: Ras-related protein RABA6a (233 aa).

20 to 27 (GDSAVGKS) serves as a coordination point for GTP. The Effector region signature appears at 42 to 50 (SKPTIGVEF). GTP is bound by residues 68–72 (DTAGQ), 126–129 (NKSD), and 156–157 (SA). 2 S-geranylgeranyl cysteine lipidation sites follow: Cys-230 and Cys-231.

This sequence belongs to the small GTPase superfamily. Rab family.

The protein resides in the cell membrane. In terms of biological role, intracellular vesicle trafficking and protein transport. In Arabidopsis thaliana (Mouse-ear cress), this protein is Ras-related protein RABA6a (RABA6A).